The chain runs to 326 residues: Adenosine receptor A1 (326 aa).

The Extracellular portion of the chain corresponds to 1–10 (MPPYISAFQA). The chain crosses the membrane as a helical span at residues 11–33 (AYIGIEVLIALVSVPGNVLVIWA). Over 34–46 (VKVNQALRDATFC) the chain is Cytoplasmic. Residues 47-69 (FIVSLAVADVAVGALVIPLAILI) traverse the membrane as a helical segment. Residues 70 to 80 (NIGPQTYFHTC) are Extracellular-facing. A disulfide bridge links Cys-80 with Cys-169. The helical transmembrane segment at 81-102 (LMVACPVLILTQSSILALLAIA) threads the bilayer. At 103-123 (VDRYLRVKIPLRYKTVVTQRR) the chain is on the cytoplasmic side. A helical transmembrane segment spans residues 124-146 (AAVAIAGCWILSLVVGLTPMFGW). Residues 147–176 (NNLSEVEQAWIANGSVGEPVIKCEFEKVIS) are Extracellular-facing. Asn-148 and Asn-159 each carry an N-linked (GlcNAc...) asparagine glycan. A helical membrane pass occupies residues 177–201 (MEYMVYFNFFVWVLPPLLLMVLIYL). The Cytoplasmic segment spans residues 202-235 (EVFYLIRKQLNKKVSASSGDPQKYYGKELKIAKS). Residues 236 to 259 (LALILFLFALSWLPLHILNCITLF) form a helical membrane-spanning segment. Residues 260–267 (CPTCQKPS) are Extracellular-facing. The helical transmembrane segment at 268-292 (ILIYIAIFLTHGNSAMNPIVYAFRI) threads the bilayer. Residues 293-326 (HKFRVTFLKIWNDHFRCQPKPPIEEDIPEEKADD) lie on the Cytoplasmic side of the membrane. The S-palmitoyl cysteine moiety is linked to residue Cys-309.

This sequence belongs to the G-protein coupled receptor 1 family.

It localises to the cell membrane. In terms of biological role, receptor for adenosine. The activity of this receptor is mediated by G proteins which inhibit adenylyl cyclase. This Mus musculus (Mouse) protein is Adenosine receptor A1 (Adora1).